The primary structure comprises 349 residues: tRNA pseudouridine synthase D (349 aa).

Residue Phe-27 participates in substrate binding. Residue Asp-80 is the Nucleophile of the active site. Residue Asn-129 coordinates substrate. In terms of domain architecture, TRUD spans 155–303 (GVPNYFGAQR…VEAARRAMLL (149 aa)). Phe-329 serves as a coordination point for substrate.

This sequence belongs to the pseudouridine synthase TruD family.

The enzyme catalyses uridine(13) in tRNA = pseudouridine(13) in tRNA. Responsible for synthesis of pseudouridine from uracil-13 in transfer RNAs. In Escherichia coli O9:H4 (strain HS), this protein is tRNA pseudouridine synthase D.